Reading from the N-terminus, the 761-residue chain is Coenzyme PQQ synthesis protein F (761 aa).

His-49 is a binding site for Zn(2+). Glu-52 (proton acceptor) is an active-site residue. Residues His-53 and Glu-130 each contribute to the Zn(2+) site.

Belongs to the peptidase M16 family. The cofactor is Zn(2+).

The protein operates within cofactor biosynthesis; pyrroloquinoline quinone biosynthesis. Functionally, required for coenzyme pyrroloquinoline quinone (PQQ) biosynthesis. It is thought that this protein is a protease that cleaves peptides bond in a small peptide (gene pqqA), providing the glutamate and tyrosine residues which are necessary for the synthesis of PQQ. In Klebsiella pneumoniae, this protein is Coenzyme PQQ synthesis protein F (pqqF).